We begin with the raw amino-acid sequence, 303 residues long: Glyceraldehyde-3-phosphate dehydrogenase (303 aa).

NAD(+)-binding positions include 6 to 7 (RI), D28, R72, and T114. Residues 143–145 (SCT), T174, 203–204 (TG), and R226 contribute to the D-glyceraldehyde 3-phosphate site. Residue C144 is the Nucleophile of the active site.

This sequence belongs to the glyceraldehyde-3-phosphate dehydrogenase family. In terms of assembly, homotetramer.

Its subcellular location is the cytoplasm. The catalysed reaction is D-glyceraldehyde 3-phosphate + phosphate + NAD(+) = (2R)-3-phospho-glyceroyl phosphate + NADH + H(+). It functions in the pathway carbohydrate degradation; glycolysis; pyruvate from D-glyceraldehyde 3-phosphate: step 1/5. Its function is as follows. Catalyzes the oxidative phosphorylation of glyceraldehyde 3-phosphate (G3P) to 1,3-bisphosphoglycerate (BPG) using the cofactor NAD. The first reaction step involves the formation of a hemiacetal intermediate between G3P and a cysteine residue, and this hemiacetal intermediate is then oxidized to a thioester, with concomitant reduction of NAD to NADH. The reduced NADH is then exchanged with the second NAD, and the thioester is attacked by a nucleophilic inorganic phosphate to produce BPG. In Klebsiella pneumoniae, this protein is Glyceraldehyde-3-phosphate dehydrogenase (gap).